The following is a 96-amino-acid chain: Putative antiholin (96 aa).

Over 1–4 (MIEM) the chain is Periplasmic. Cytoplasmic-facing segments span residues 1-32 (MIEM…KKTE) and 26-29 (QAIK). Residues 5–25 (EFGKELLVYMTFLVVVTPVFV) form a helical membrane-spanning segment. Residues 33–55 (LVPSKWLPTVSILIGAILGALAT) form a helical membrane-spanning segment. At 56-60 (FLDGS) the chain is on the periplasmic side. A helical membrane pass occupies residues 61–81 (GSLATMIWAGALAGAGGTGLF). Topologically, residues 82 to 96 (EQFTNRSKKYGEDDK) are cytoplasmic.

In terms of assembly, homomultimer. Interacts with isoform Antiholin; this interaction blocks the holin homomultimerization and delays host cell lysis.

It localises to the host cell inner membrane. Its function is as follows. Accumulates harmlessly in the cytoplasmic membrane until it reaches a critical concentration that triggers the formation of micron-scale pores (holes) causing host cell membrane disruption and endolysin escape into the periplasmic space. Determines the precise timing of host cell lysis. Participates with the endolysin and spanin proteins in the sequential events which lead to the programmed host cell lysis releasing the mature viral particles from the host cell. Functionally, isoform Antiholin: Counteracts the aggregation of the holin molecules and thus of pore formation. The polypeptide is Putative antiholin (hol) (Listeria monocytogenes (Bacteriophage A118)).